The primary structure comprises 412 residues: Multifunctional CCA protein (412 aa).

ATP-binding residues include glycine 8 and arginine 11. Residues glycine 8 and arginine 11 each coordinate CTP. Residues aspartate 21 and aspartate 23 each contribute to the Mg(2+) site. The ATP site is built by arginine 91, arginine 137, and arginine 140. The CTP site is built by arginine 91, arginine 137, and arginine 140. Positions 228–329 (TGIHTLMTLS…VKLFDSIDAW (102 aa)) constitute an HD domain.

It belongs to the tRNA nucleotidyltransferase/poly(A) polymerase family. Bacterial CCA-adding enzyme type 1 subfamily. Monomer. Can also form homodimers and oligomers. It depends on Mg(2+) as a cofactor. The cofactor is Ni(2+).

The enzyme catalyses a tRNA precursor + 2 CTP + ATP = a tRNA with a 3' CCA end + 3 diphosphate. It carries out the reaction a tRNA with a 3' CCA end + 2 CTP + ATP = a tRNA with a 3' CCACCA end + 3 diphosphate. Catalyzes the addition and repair of the essential 3'-terminal CCA sequence in tRNAs without using a nucleic acid template. Adds these three nucleotides in the order of C, C, and A to the tRNA nucleotide-73, using CTP and ATP as substrates and producing inorganic pyrophosphate. tRNA 3'-terminal CCA addition is required both for tRNA processing and repair. Also involved in tRNA surveillance by mediating tandem CCA addition to generate a CCACCA at the 3' terminus of unstable tRNAs. While stable tRNAs receive only 3'-terminal CCA, unstable tRNAs are marked with CCACCA and rapidly degraded. In Escherichia coli O6:K15:H31 (strain 536 / UPEC), this protein is Multifunctional CCA protein.